We begin with the raw amino-acid sequence, 658 residues long: MYLTLIVLPLLGSISSGFFGRKIGVSGSHIITCSSVILTTLLALLAFIEVGINNIPVTIDVARWIDAEALNVMWSFKFDSLTVSMLIPVLIVSSLVHIYSISYMSHDPHNQRFFSYLSLFTFMMIILVTGNNYLLMFVGWEGVGICSYLLINFWFTRIAANQSSISALLTNRVGDCFLTIGIFAMLWSFGNIDYNLIFSLAPYYNENIITMIGICLVIGATAKSSQVGLHIWLPQAMEGPTPVSALIHAATMVTAGVYLLMRSSPLIEYSSTVLIICLWLGAITTVFSSLIGLFQQDIKKVIAYSTMSQLGMMVIGIGLSSYNIALFHLVNHAFYKALLFLGAGAVIHSVADNQDFRKYGGLRPFLPLTYSVMLIASLSLVAVPFMTGFYSKDLILESAYGQFYLSGTIVYFIATIGAMFTTLYSAKVLYLTFLTNPNGPLNNYKYAHEGDLFLNIPLIILAVFSIFFGFLTKDIFIGLGTGFFSDNSLFIHPNHEILLDTEFAVPVLFKLLPFFFTISLSILSILYSEFTPNLLINFKFSTLGYNIFSFFNQRFYIELLYNKYIVENILTLGGQTTKSLDKGSVEYLGPYGLEKGLLNLSNSINNLSTGVVTTYALYILMGLMFYISTLYFFNWDSNLLILIIFSLFVILNNKLLQK.

Transmembrane regions (helical) follow at residues 4–23 (TLIVLPLLGSISSGFFGRKI), 30–52 (IITCSSVILTTLLALLAFIEVGI), 81–103 (LTVSMLIPVLIVSSLVHIYSISY), 112–129 (RFFSYLSLFTFMMIILVT), 133–155 (YLLMFVGWEGVGICSYLLINFWF), 168–190 (LLTNRVGDCFLTIGIFAMLWSFG), 200–222 (LAPYYNENIITMIGICLVIGATA), 243–262 (VSALIHAATMVTAGVYLLMR), 272–294 (TVLIICLWLGAITTVFSSLIGLF), 301–319 (VIAYSTMSQLGMMVIGIGL), 329–351 (LVNHAFYKALLFLGAGAVIHSVA), 364–386 (PFLPLTYSVMLIASLSLVAVPFM), 409–431 (IVYFIATIGAMFTTLYSAKVLYL), 452–471 (LFLNIPLIILAVFSIFFGFL), 505–527 (VPVLFKLLPFFFTISLSILSILY), 607–629 (LSTGVVTTYALYILMGLMFYIST), and 639–656 (LLILIIFSLFVILNNKLL).

It belongs to the complex I subunit 5 family.

It is found in the mitochondrion inner membrane. It carries out the reaction a ubiquinone + NADH + 5 H(+)(in) = a ubiquinol + NAD(+) + 4 H(+)(out). Functionally, core subunit of the mitochondrial membrane respiratory chain NADH dehydrogenase (Complex I) that is believed to belong to the minimal assembly required for catalysis. Complex I functions in the transfer of electrons from NADH to the respiratory chain. The immediate electron acceptor for the enzyme is believed to be ubiquinone. The chain is NADH-ubiquinone oxidoreductase chain 5 (nad5) from Talaromyces marneffei (Penicillium marneffei).